Here is a 477-residue protein sequence, read N- to C-terminus: 3-isopropylmalate dehydratase large subunit (477 aa).

Positions 352, 413, and 416 each coordinate [4Fe-4S] cluster.

This sequence belongs to the aconitase/IPM isomerase family. LeuC type 1 subfamily. Heterodimer of LeuC and LeuD. [4Fe-4S] cluster is required as a cofactor.

It catalyses the reaction (2R,3S)-3-isopropylmalate = (2S)-2-isopropylmalate. It participates in amino-acid biosynthesis; L-leucine biosynthesis; L-leucine from 3-methyl-2-oxobutanoate: step 2/4. In terms of biological role, catalyzes the isomerization between 2-isopropylmalate and 3-isopropylmalate, via the formation of 2-isopropylmaleate. The polypeptide is 3-isopropylmalate dehydratase large subunit (Pseudomonas entomophila (strain L48)).